The primary structure comprises 67 residues: Small, acid-soluble spore protein B (67 aa).

This sequence belongs to the alpha/beta-type SASP family.

Its function is as follows. SASP are bound to spore DNA. They are double-stranded DNA-binding proteins that cause DNA to change to an a-like conformation. They protect the DNA backbone from chemical and enzymatic cleavage and are thus involved in dormant spore's high resistance to UV light. This chain is Small, acid-soluble spore protein B (sspB), found in Bacillus subtilis (strain 168).